Reading from the N-terminus, the 602-residue chain is Chaperone protein dnaK (602 aa).

Belongs to the heat shock protein 70 family.

It is found in the plastid. The protein resides in the chloroplast. In terms of biological role, acts as a chaperone. This Thalassiosira pseudonana (Marine diatom) protein is Chaperone protein dnaK.